Reading from the N-terminus, the 141-residue chain is Large ribosomal subunit protein uL11 (141 aa).

Belongs to the universal ribosomal protein uL11 family. Part of the ribosomal stalk of the 50S ribosomal subunit. Interacts with L10 and the large rRNA to form the base of the stalk. L10 forms an elongated spine to which L12 dimers bind in a sequential fashion forming a multimeric L10(L12)X complex. In terms of processing, one or more lysine residues are methylated.

Forms part of the ribosomal stalk which helps the ribosome interact with GTP-bound translation factors. In Methylacidiphilum infernorum (isolate V4) (Methylokorus infernorum (strain V4)), this protein is Large ribosomal subunit protein uL11.